The following is a 620-amino-acid chain: Chaperone protein DnaK (620 aa).

Residue Thr174 is modified to Phosphothreonine; by autocatalysis. Residues 590-620 (AAGAGPDMSGAGPQGDTYAGDDVVDGDYREV) form a disordered region.

Belongs to the heat shock protein 70 family.

Functionally, acts as a chaperone. This is Chaperone protein DnaK from Lachnoclostridium phytofermentans (strain ATCC 700394 / DSM 18823 / ISDg) (Clostridium phytofermentans).